The following is a 323-amino-acid chain: Acetyl-coenzyme A carboxylase carboxyl transferase subunit alpha (323 aa).

Residues 32 to 293 (NISEEVAKLQ…RKALAAQLES (262 aa)) form the CoA carboxyltransferase C-terminal domain.

This sequence belongs to the AccA family. As to quaternary structure, acetyl-CoA carboxylase is a heterohexamer composed of biotin carboxyl carrier protein (AccB), biotin carboxylase (AccC) and two subunits each of ACCase subunit alpha (AccA) and ACCase subunit beta (AccD).

It localises to the cytoplasm. It carries out the reaction N(6)-carboxybiotinyl-L-lysyl-[protein] + acetyl-CoA = N(6)-biotinyl-L-lysyl-[protein] + malonyl-CoA. It functions in the pathway lipid metabolism; malonyl-CoA biosynthesis; malonyl-CoA from acetyl-CoA: step 1/1. Its function is as follows. Component of the acetyl coenzyme A carboxylase (ACC) complex. First, biotin carboxylase catalyzes the carboxylation of biotin on its carrier protein (BCCP) and then the CO(2) group is transferred by the carboxyltransferase to acetyl-CoA to form malonyl-CoA. The sequence is that of Acetyl-coenzyme A carboxylase carboxyl transferase subunit alpha from Alcanivorax borkumensis (strain ATCC 700651 / DSM 11573 / NCIMB 13689 / SK2).